Here is a 1129-residue protein sequence, read N- to C-terminus: Protein DWARF 53-LIKE (1129 aa).

In terms of domain architecture, Clp R spans 8–180 (ARQCLSPAAV…KLAILRPAPP (173 aa)). Repeat regions lie at residues 12 to 85 (LSPA…LDRL) and 102 to 180 (VSNS…PAPP). Positions 519–573 (RYIGVPADKERSANPSKGSESIGVQKDVIKPCAVSAVHSSSTARPISSPSVTNKR) are disordered. Residues 557-568 (SSSTARPISSPS) are compositionally biased toward low complexity. Positions 577–581 (LVLNL) match the EAR 1 motif. Residues 587 to 654 (KSDENLQERG…KRVEDSERSV (68 aa)) form a disordered region. Positions 596–608 (GMQSQHGTLSNAD) are enriched in polar residues. The segment covering 645–654 (KRVEDSERSV) has biased composition (basic and acidic residues). 2 short sequence motifs (EAR) span residues 798–802 (LDLNL) and 975–980 (FDLNLP). The tract at residues 975 to 1001 (FDLNLPVDEDEPFDADDDSSSHENSYG) is disordered. Residues 981-992 (VDEDEPFDADDD) show a composition bias toward acidic residues.

This sequence belongs to the ClpA/ClpB family. In terms of processing, polyubiquitinated. Strigolactone, but not karrikin, triggers rapid SCF(D3)-dependent degradation via the proteasome.

In terms of biological role, repressor of strigolactones (SL) signaling. Subjected to a negative feedback control of SL signaling. This chain is Protein DWARF 53-LIKE, found in Oryza sativa subsp. japonica (Rice).